We begin with the raw amino-acid sequence, 87 residues long: MRLFLSLPVLVVVLAMVLEGPAPAQAAPEISSTLERIPDKLKEFGNTLENKARAAIESIKQSDLPAKTRNWFSETFNKVEQLKTTFS.

Residues 1-26 (MRLFLSLPVLVVVLAMVLEGPAPAQA) form the signal peptide.

Belongs to the apolipoprotein C1 family.

It is found in the secreted. Its function is as follows. Inhibitor of lipoprotein binding to the low density lipoprotein (LDL) receptor, LDL receptor-related protein, and very low density lipoprotein (VLDL) receptor. Associates with high density lipoproteins (HDL) and the triacylglycerol-rich lipoproteins in the plasma and makes up about 10% of the protein of the VLDL and 2% of that of HDL. Appears to interfere directly with fatty acid uptake and is also the major plasma inhibitor of cholesteryl ester transfer protein (CETP). Binds free fatty acids and reduces their intracellular esterification. Modulates the interaction of APOE with beta-migrating VLDL and inhibits binding of beta-VLDL to the LDL receptor-related protein. This is Apolipoprotein C-I (APOC1) from Zalophus californianus (California sealion).